An 81-amino-acid polypeptide reads, in one-letter code: Photosystem I iron-sulfur center (81 aa).

4Fe-4S ferredoxin-type domains follow at residues 2–31 and 39–68; these read SHSVKIYDTCIGCTQCVRACPTDVLEMIPW and IASAPRTEDCVGCKRCESACPTDFLSVRVY. [4Fe-4S] cluster-binding residues include cysteine 11, cysteine 14, cysteine 17, cysteine 21, cysteine 48, cysteine 51, cysteine 54, and cysteine 58.

In terms of assembly, the eukaryotic PSI reaction center is composed of at least 11 subunits. [4Fe-4S] cluster serves as cofactor.

It is found in the plastid. It localises to the chloroplast thylakoid membrane. It catalyses the reaction reduced [plastocyanin] + hnu + oxidized [2Fe-2S]-[ferredoxin] = oxidized [plastocyanin] + reduced [2Fe-2S]-[ferredoxin]. In terms of biological role, apoprotein for the two 4Fe-4S centers FA and FB of photosystem I (PSI); essential for photochemical activity. FB is the terminal electron acceptor of PSI, donating electrons to ferredoxin. The C-terminus interacts with PsaA/B/D and helps assemble the protein into the PSI complex. Required for binding of PsaD and PsaE to PSI. PSI is a plastocyanin-ferredoxin oxidoreductase, converting photonic excitation into a charge separation, which transfers an electron from the donor P700 chlorophyll pair to the spectroscopically characterized acceptors A0, A1, FX, FA and FB in turn. The chain is Photosystem I iron-sulfur center from Acorus calamus (Sweet flag).